A 131-amino-acid chain; its full sequence is Peptidyl-prolyl cis-trans isomerase NIMA-interacting 4 (131 aa).

Residues 1-25 (MPPKGKSGSGKGGKGGAASGSDSAD) form a necessary for nuclear localization and DNA-binding region. Positions 1 to 39 (MPPKGKSGSGKGGKGGAASGSDSADKKSQGPKGGGNAVK) are disordered. The tract at residues 1–41 (MPPKGKSGSGKGGKGGAASGSDSADKKSQGPKGGGNAVKVR) is necessary for association with the pre-rRNP complexes. Residues 7–18 (SGSGKGGKGGAA) are compositionally biased toward gly residues. A Phosphoserine; by CK2 modification is found at Ser19. The region spanning 35 to 129 (GNAVKVRHIL…FGYHIIMVEG (95 aa)) is the PpiC domain.

Belongs to the PpiC/parvulin rotamase family. PIN4 subfamily. Found in pre-ribosomal ribonucleoprotein (pre-rRNP) complexes. Post-translationally, phosphorylated. Phosphorylation occurs both in the nucleus and the cytoplasm. Phosphorylation at Ser-19 does not affect its PPIase activity but is required for nuclear localization, and the dephosphorylation is a prerequisite for the binding to DNA. The unphosphorylated form associates with the pre-rRNP complexes in the nucleus.

It is found in the nucleus. The protein localises to the nucleolus. Its subcellular location is the cytoplasm. It localises to the cytoskeleton. The protein resides in the spindle. The catalysed reaction is [protein]-peptidylproline (omega=180) = [protein]-peptidylproline (omega=0). Its function is as follows. Involved as a ribosomal RNA processing factor in ribosome biogenesis. Binds to tightly bent AT-rich stretches of double-stranded DNA. This chain is Peptidyl-prolyl cis-trans isomerase NIMA-interacting 4 (Pin4), found in Mus musculus (Mouse).